Consider the following 660-residue polypeptide: Acetyl-coenzyme A synthetase (660 aa).

CoA-binding positions include 197–200 (RGGK) and threonine 317. ATP contacts are provided by residues 397–399 (GEP), 421–426 (DTFWQT), aspartate 512, and arginine 528. Serine 536 is a CoA binding site. Arginine 539 provides a ligand contact to ATP. Mg(2+)-binding residues include valine 550 and valine 555. Lysine 625 bears the N6-acetyllysine mark.

Belongs to the ATP-dependent AMP-binding enzyme family. Requires Mg(2+) as cofactor. Acetylated. Deacetylation by the SIR2-homolog deacetylase activates the enzyme.

It catalyses the reaction acetate + ATP + CoA = acetyl-CoA + AMP + diphosphate. Functionally, catalyzes the conversion of acetate into acetyl-CoA (AcCoA), an essential intermediate at the junction of anabolic and catabolic pathways. AcsA undergoes a two-step reaction. In the first half reaction, AcsA combines acetate with ATP to form acetyl-adenylate (AcAMP) intermediate. In the second half reaction, it can then transfer the acetyl group from AcAMP to the sulfhydryl group of CoA, forming the product AcCoA. This chain is Acetyl-coenzyme A synthetase, found in Herminiimonas arsenicoxydans.